Consider the following 932-residue polypeptide: Protein translocase subunit SecA (932 aa).

ATP-binding positions include Q87, 105 to 109, and D515; that span reads GEGKT. Residues C916, C918, C927, and H928 each coordinate Zn(2+).

This sequence belongs to the SecA family. In terms of assembly, monomer and homodimer. Part of the essential Sec protein translocation apparatus which comprises SecA, SecYEG and auxiliary proteins SecDF-YajC and YidC. It depends on Zn(2+) as a cofactor.

It localises to the cell inner membrane. It is found in the cytoplasm. The catalysed reaction is ATP + H2O + cellular proteinSide 1 = ADP + phosphate + cellular proteinSide 2.. Its function is as follows. Part of the Sec protein translocase complex. Interacts with the SecYEG preprotein conducting channel. Has a central role in coupling the hydrolysis of ATP to the transfer of proteins into and across the cell membrane, serving both as a receptor for the preprotein-SecB complex and as an ATP-driven molecular motor driving the stepwise translocation of polypeptide chains across the membrane. The polypeptide is Protein translocase subunit SecA (Burkholderia orbicola (strain AU 1054)).